The chain runs to 63 residues: Large ribosomal subunit protein uL30 (63 aa).

It belongs to the universal ribosomal protein uL30 family. In terms of assembly, part of the 50S ribosomal subunit.

This Rickettsia typhi (strain ATCC VR-144 / Wilmington) protein is Large ribosomal subunit protein uL30.